Here is a 1074-residue protein sequence, read N- to C-terminus: Phospholipase D1 (1074 aa).

Residues valine 81 to serine 212 form the PX domain. The region spanning proline 219–glutamine 328 is the PH domain. S-palmitoyl cysteine attachment occurs at residues cysteine 240 and cysteine 241. One can recognise a PLD phosphodiesterase 1 domain in the interval tyrosine 459–arginine 486. The tract at residues histidine 463–alanine 928 is catalytic. Phosphoserine occurs at positions 499, 561, and 629. The region spanning glutamate 891–serine 918 is the PLD phosphodiesterase 2 domain.

It belongs to the phospholipase D family. Interacts with PIP5K1B. In terms of processing, phosphorylated on serine and threonine residues. Post-translationally, it is uncertain whether palmitoylation is on Cys-240 and/or Cys-241. Palmitoylation is required prior to phosphorylation.

It is found in the cytoplasm. Its subcellular location is the perinuclear region. The protein localises to the endoplasmic reticulum membrane. It localises to the golgi apparatus membrane. The protein resides in the late endosome membrane. It carries out the reaction a 1,2-diacyl-sn-glycero-3-phosphocholine + H2O = a 1,2-diacyl-sn-glycero-3-phosphate + choline + H(+). The enzyme catalyses ethanol + a 1,2-diacyl-sn-glycero-3-phosphocholine = 1,2-diacyl-sn-glycero-3-phosphoethanol + choline. It catalyses the reaction 1,2-dihexadecanoyl-sn-glycero-3-phosphocholine + H2O = 1,2-dihexadecanoyl-sn-glycero-3-phosphate + choline + H(+). Stimulated by phosphatidylinositol 4,5-bisphosphate and phosphatidylinositol 3,4,5-trisphosphate, activated by the phosphokinase C-alpha, by the ADP-ribosylation factor-1 (ARF-1), and to a lesser extent by GTP-binding proteins: RHO A, RAC-1 and CDC42. Inhibited by oleate. Function as phospholipase selective for phosphatidylcholine. Implicated as a critical step in numerous cellular pathways, including signal transduction, membrane trafficking, and the regulation of mitosis. May be involved in the regulation of perinuclear intravesicular membrane traffic. This is Phospholipase D1 from Rattus norvegicus (Rat).